The sequence spans 437 residues: Glutamyl-tRNA reductase (437 aa).

Substrate-binding positions include 46–49, Ser-97, 102–104, and Gln-108; these read TCNR and EEQ. Residue Cys-47 is the Nucleophile of the active site. Residue 177–182 coordinates NADP(+); that stretch reads GAGEMG. A disordered region spans residues 410–437; it reads NGRVSEGKDAKVEEGKPEVDVQRSKAES. Basic and acidic residues predominate over residues 414–437; that stretch reads SEGKDAKVEEGKPEVDVQRSKAES.

It belongs to the glutamyl-tRNA reductase family. As to quaternary structure, homodimer.

It catalyses the reaction (S)-4-amino-5-oxopentanoate + tRNA(Glu) + NADP(+) = L-glutamyl-tRNA(Glu) + NADPH + H(+). It functions in the pathway porphyrin-containing compound metabolism; protoporphyrin-IX biosynthesis; 5-aminolevulinate from L-glutamyl-tRNA(Glu): step 1/2. Catalyzes the NADPH-dependent reduction of glutamyl-tRNA(Glu) to glutamate 1-semialdehyde (GSA). This Archaeoglobus fulgidus (strain ATCC 49558 / DSM 4304 / JCM 9628 / NBRC 100126 / VC-16) protein is Glutamyl-tRNA reductase.